Reading from the N-terminus, the 321-residue chain is Cytochrome c biogenesis protein CcsA (321 aa).

7 helical membrane passes run 9-29, 44-64, 68-88, 143-163, 226-246, 260-274, and 289-309; these read ILTH…LITL, GMIA…ASSG, LSNL…LHMI, MLLS…LLMI, VISL…VWAN, TWAF…IYLH, and VASI…LLGI.

Belongs to the CcmF/CycK/Ccl1/NrfE/CcsA family. As to quaternary structure, may interact with Ccs1.

The protein localises to the plastid. Its subcellular location is the chloroplast thylakoid membrane. Required during biogenesis of c-type cytochromes (cytochrome c6 and cytochrome f) at the step of heme attachment. This chain is Cytochrome c biogenesis protein CcsA, found in Oryza sativa (Rice).